Reading from the N-terminus, the 129-residue chain is Small ribosomal subunit protein uS11 (129 aa).

This sequence belongs to the universal ribosomal protein uS11 family. As to quaternary structure, part of the 30S ribosomal subunit. Interacts with proteins S7 and S18. Binds to IF-3.

In terms of biological role, located on the platform of the 30S subunit, it bridges several disparate RNA helices of the 16S rRNA. Forms part of the Shine-Dalgarno cleft in the 70S ribosome. This Bacillus cereus (strain ATCC 14579 / DSM 31 / CCUG 7414 / JCM 2152 / NBRC 15305 / NCIMB 9373 / NCTC 2599 / NRRL B-3711) protein is Small ribosomal subunit protein uS11.